The chain runs to 139 residues: Holo-[acyl-carrier-protein] synthase (139 aa).

The Mg(2+) site is built by D8 and E61.

It belongs to the P-Pant transferase superfamily. AcpS family. Requires Mg(2+) as cofactor.

Its subcellular location is the cytoplasm. It catalyses the reaction apo-[ACP] + CoA = holo-[ACP] + adenosine 3',5'-bisphosphate + H(+). In terms of biological role, transfers the 4'-phosphopantetheine moiety from coenzyme A to a Ser of acyl-carrier-protein. The sequence is that of Holo-[acyl-carrier-protein] synthase from Nitrobacter hamburgensis (strain DSM 10229 / NCIMB 13809 / X14).